A 398-amino-acid polypeptide reads, in one-letter code: MAYDVARVRGLHPSLGDGWVHFDAPAGMLIPDSVATTVSTAFRRSGASTVGAHPSARRSAAVLDAAREAVADLVNADPGGVVLGADRAVLLSLLAEASSSRAGLGYEVIVSRLDDEANIAPWLRAAHRYGAKVKWAEVDIETGELPTWQWESLISKSTRLVAVNSASGTLGGVTDLRAMTKLVHDVGALVVVDHSAAAPYRLLDIRETDADVVTVNAHAWGGPPIGAMVFRDPSVMNSFGSVSTNPYATGPARLEIGVHQFGLLAGVVASIEYLAALDESARGSRRERLAVSMQSADAYLNRVFDYLMVSLRSLPLVMLIGRPEAQIPVVSFAVHKVPADRVVQRLADNGILAIANTGSRVLDVLGVNDVGGAVTVGLAHYSTMAEVDQLVRALASLG.

The protein belongs to the class-V pyridoxal-phosphate-dependent aminotransferase family. Homodimer.

In terms of biological role, is essential for optimal growth. This is an uncharacterized protein from Mycobacterium tuberculosis (strain CDC 1551 / Oshkosh).